Consider the following 808-residue polypeptide: Phospholipase D alpha 1 (808 aa).

The 125-residue stretch at 1 to 125 (MAKTLLHGTL…LEGEEVDKWV (125 aa)) folds into the C2 domain. D186 contacts Ca(2+). A PLD phosphodiesterase 1 domain is found at 326–364 (TIFTHHQKIVVVDSEMPTSGSENRRVVSFVGGIDLCDGR). Residues H331, K333, and D338 contribute to the active site. Position 331 (H331) interacts with a 1,2-diacyl-sn-glycero-3-phosphate. The Ca(2+) site is built by H370 and H404. The PLD phosphodiesterase 2 domain occupies 654 to 681 (FMIYVHAKMMIVDDEYIIIGSANINQRS). Catalysis depends on residues H659, K661, and D666. An a 1,2-diacyl-sn-glycero-3-phosphate-binding site is contributed by H659. E720 serves as a coordination point for Ca(2+).

This sequence belongs to the phospholipase D family. C2-PLD subfamily. It depends on Ca(2+) as a cofactor.

The catalysed reaction is a 1,2-diacyl-sn-glycero-3-phosphocholine + H2O = a 1,2-diacyl-sn-glycero-3-phosphate + choline + H(+). Functionally, hydrolyzes glycerol-phospholipids at the terminal phosphodiesteric bond. Plays an important role in various cellular processes. The protein is Phospholipase D alpha 1 (PLD1) of Spuriopimpinella brachycarpa (Chamnamul).